Here is a 294-residue protein sequence, read N- to C-terminus: ATP synthase gamma chain (294 aa).

It belongs to the ATPase gamma chain family. F-type ATPases have 2 components, CF(1) - the catalytic core - and CF(0) - the membrane proton channel. CF(1) has five subunits: alpha(3), beta(3), gamma(1), delta(1), epsilon(1). CF(0) has three main subunits: a, b and c.

Its subcellular location is the cell inner membrane. In terms of biological role, produces ATP from ADP in the presence of a proton gradient across the membrane. The gamma chain is believed to be important in regulating ATPase activity and the flow of protons through the CF(0) complex. In Parvibaculum lavamentivorans (strain DS-1 / DSM 13023 / NCIMB 13966), this protein is ATP synthase gamma chain.